A 25-amino-acid chain; its full sequence is Large ribosomal subunit protein uL30 (25 aa).

This sequence belongs to the universal ribosomal protein uL30 family. As to quaternary structure, part of the 50S ribosomal subunit.

The polypeptide is Large ribosomal subunit protein uL30 (rpmD) (Pseudomonas fluorescens biotype A).